We begin with the raw amino-acid sequence, 975 residues long: Aminopeptidase N (975 aa).

The Cytoplasmic portion of the chain corresponds to 1-11 (MAKGFYISKAL). The helical; Signal-anchor for type II membrane protein transmembrane segment at 12–32 (GILAIVLGIAAVSTIIALSVV) threads the bilayer. The cytosolic Ser/Thr-rich junction stretch occupies residues 33-74 (YAQEKNKNAESSPVSSPVSSPVSSPVSPTNPSTTAATTLAQS). Residues 33 to 975 (YAQEKNKNAE…VLQWFRENSQ (943 aa)) are Extracellular-facing. The segment at 41–68 (AESSPVSSPVSSPVSSPVSPTNPSTTAA) is disordered. Over residues 43–59 (SSPVSSPVSSPVSSPVS) the composition is skewed to low complexity. The metalloprotease stretch occupies residues 75 to 975 (KPWNHYRLPK…VLQWFRENSQ (901 aa)). An N-linked (GlcNAc...) asparagine glycan is attached at N134. Residue Y182 is modified to Sulfotyrosine. 2 N-linked (GlcNAc...) asparagine glycosylation sites follow: N240 and N271. 358-362 (GAMEN) provides a ligand contact to substrate. H394 is a binding site for Zn(2+). E395 functions as the Proton acceptor in the catalytic mechanism. Positions 398 and 417 each coordinate Zn(2+). A sulfotyrosine mark is found at Y425 and Y430. N533, N580, N633, N689, and N747 each carry an N-linked (GlcNAc...) asparagine glycan. 2 cysteine pairs are disulfide-bonded: C769–C776 and C806–C842. N826 is a glycosylation site (N-linked (GlcNAc...) asparagine).

Belongs to the peptidase M1 family. In terms of assembly, (Microbial infection) Interacts with CCoV spike glycoprotein. Homodimer. Interacts with SLC6A19. Zn(2+) is required as a cofactor. In terms of processing, sulfated. Post-translationally, N- and O-glycosylated. May undergo proteolysis and give rise to a soluble form.

The protein localises to the cell membrane. It carries out the reaction Release of an N-terminal amino acid, Xaa-|-Yaa- from a peptide, amide or arylamide. Xaa is preferably Ala, but may be most amino acids including Pro (slow action). When a terminal hydrophobic residue is followed by a prolyl residue, the two may be released as an intact Xaa-Pro dipeptide.. In terms of biological role, broad specificity aminopeptidase which plays a role in the final digestion of peptides generated from hydrolysis of proteins by gastric and pancreatic proteases. Also involved in the processing of various peptides including peptide hormones, such as angiotensin III and IV, neuropeptides, and chemokines. May also be involved the cleavage of peptides bound to major histocompatibility complex class II molecules of antigen presenting cells. May have a role in angiogenesis and promote cholesterol crystallization. May have a role in amino acid transport by acting as binding partner of amino acid transporter SLC6A19 and regulating its activity. Its function is as follows. (Microbial infection) Probable receptor for canine coronavirus (CCoV). This is Aminopeptidase N (ANPEP) from Canis lupus familiaris (Dog).